A 152-amino-acid chain; its full sequence is Deoxyuridine 5'-triphosphate nucleotidohydrolase (152 aa).

Substrate contacts are provided by residues arginine 71–glycine 73, asparagine 84, leucine 88–aspartate 90, and methionine 98.

It belongs to the dUTPase family. The cofactor is Mg(2+).

It catalyses the reaction dUTP + H2O = dUMP + diphosphate + H(+). It functions in the pathway pyrimidine metabolism; dUMP biosynthesis; dUMP from dCTP (dUTP route): step 2/2. Functionally, this enzyme is involved in nucleotide metabolism: it produces dUMP, the immediate precursor of thymidine nucleotides and it decreases the intracellular concentration of dUTP so that uracil cannot be incorporated into DNA. The polypeptide is Deoxyuridine 5'-triphosphate nucleotidohydrolase (Shewanella baltica (strain OS185)).